A 125-amino-acid chain; its full sequence is Small ribosomal subunit protein uS12 (125 aa).

Position 89 is a 3-methylthioaspartic acid (Asp-89).

The protein belongs to the universal ribosomal protein uS12 family. As to quaternary structure, part of the 30S ribosomal subunit. Contacts proteins S8 and S17. May interact with IF1 in the 30S initiation complex.

Functionally, with S4 and S5 plays an important role in translational accuracy. Interacts with and stabilizes bases of the 16S rRNA that are involved in tRNA selection in the A site and with the mRNA backbone. Located at the interface of the 30S and 50S subunits, it traverses the body of the 30S subunit contacting proteins on the other side and probably holding the rRNA structure together. The combined cluster of proteins S8, S12 and S17 appears to hold together the shoulder and platform of the 30S subunit. The chain is Small ribosomal subunit protein uS12 from Bordetella petrii (strain ATCC BAA-461 / DSM 12804 / CCUG 43448).